A 416-amino-acid polypeptide reads, in one-letter code: Glutamyl-tRNA reductase (416 aa).

Substrate contacts are provided by residues 49–52, Ser105, 110–112, and Gln116; these read TCNR and EPQ. Catalysis depends on Cys50, which acts as the Nucleophile. 185 to 190 provides a ligand contact to NADP(+); that stretch reads GAGETI.

The protein belongs to the glutamyl-tRNA reductase family. Homodimer.

It carries out the reaction (S)-4-amino-5-oxopentanoate + tRNA(Glu) + NADP(+) = L-glutamyl-tRNA(Glu) + NADPH + H(+). It functions in the pathway porphyrin-containing compound metabolism; protoporphyrin-IX biosynthesis; 5-aminolevulinate from L-glutamyl-tRNA(Glu): step 1/2. In terms of biological role, catalyzes the NADPH-dependent reduction of glutamyl-tRNA(Glu) to glutamate 1-semialdehyde (GSA). The sequence is that of Glutamyl-tRNA reductase from Shewanella denitrificans (strain OS217 / ATCC BAA-1090 / DSM 15013).